Reading from the N-terminus, the 138-residue chain is Small ribosomal subunit protein bS18m (138 aa).

Belongs to the bacterial ribosomal protein bS18 family. In terms of assembly, component of the mitochondrial small ribosomal subunit. Mature mitochondrial ribosomes consist of a small (37S) and a large (54S) subunit. The 37S subunit contains at least 33 different proteins and 1 molecule of RNA (15S). The 54S subunit contains at least 45 different proteins and 1 molecule of RNA (21S).

It localises to the mitochondrion. In Saccharomyces cerevisiae (strain RM11-1a) (Baker's yeast), this protein is Small ribosomal subunit protein bS18m (RSM18).